The chain runs to 479 residues: Poly(A) polymerase catalytic subunit (479 aa).

Residues aspartate 202 and aspartate 204 contribute to the active site. Ca(2+) is bound by residues aspartate 202, aspartate 204, and aspartate 253.

This sequence belongs to the poxviridae poly(A) polymerase catalytic subunit family. Heterodimer of a large (catalytic) subunit and a small (regulatory) subunit.

The catalysed reaction is RNA(n) + ATP = RNA(n)-3'-adenine ribonucleotide + diphosphate. Its function is as follows. Polymerase that creates the 3'-poly(A) tail of mRNA's. The polypeptide is Poly(A) polymerase catalytic subunit (OPG063) (Camelus).